Here is a 434-residue protein sequence, read N- to C-terminus: Oxysterol-binding protein homolog 5 (434 aa).

The segment at 18 to 371 (SSFNGDLSSL…KQVDYMNENT (354 aa)) is OSBP-related domain (ORD). An a 1,2-diacyl-sn-glycero-3-phospho-(1D-myo-inositol 4-phosphate)-binding site is contributed by 24 to 29 (LSSLSA). Q96 is a 20-hydroxycholesterol binding site. Q96 lines the 25-hydroxycholesterol pocket. Positions 96 and 100 each coordinate 7beta-hydroxycholesterol. Q96 contacts cholesterol. Q96 is an ergosterol binding site. A 1,2-diacyl-sn-glycero-3-phospho-(1D-myo-inositol 4-phosphate) is bound by residues 109 to 112 (KPLN), 143 to 144 (HH), K335, E339, and R343. S389 bears the Phosphoserine mark.

The protein belongs to the OSBP family.

The protein localises to the vacuole membrane. Its subcellular location is the bud neck. In terms of biological role, lipid transport protein (LTP) involved in non-vesicular transfer of lipids between membranes. Functions in phosphoinositide-coupled directional transport of various lipids by carrying the lipid molecule in a hydrophobic pocket and transferring it between membranes through the cytosol. Involved in maintenance of intracellular sterol distribution and homeostasis. Plays a role in ergosterol synthesis. Binds and transports sterol. May be involved in ergosterol transport from the plasma membrane (PM) to the ER. The protein is Oxysterol-binding protein homolog 5 of Saccharomyces cerevisiae (strain ATCC 204508 / S288c) (Baker's yeast).